We begin with the raw amino-acid sequence, 412 residues long: O-acetyl-L-homoserine sulfhydrylase 2 (412 aa).

The residue at position 202 (Lys202) is an N6-(pyridoxal phosphate)lysine.

The protein belongs to the trans-sulfuration enzymes family. As to quaternary structure, homotetramer. The cofactor is pyridoxal 5'-phosphate.

It carries out the reaction O-acetyl-L-homoserine + hydrogen sulfide = L-homocysteine + acetate. Inhibited by the carbonyl reagents hydroxylamine and phenylhydrazine. Also inhibited by methionine and propargylglycine. In terms of biological role, catalyzes the conversion of O-acetyl-L-homoserine (OAH) into homocysteine in the methionine biosynthesis pathway. Has weak activity with O-acetyl-L-serine, O-phospho-L-serine, L-serine, O-succinyl-L-homoserine and L-homoserine. Shows a very low CTT gamma-synthase activity. This Thermus thermophilus (strain ATCC 27634 / DSM 579 / HB8) protein is O-acetyl-L-homoserine sulfhydrylase 2.